The following is a 160-amino-acid chain: Phosphopantetheine adenylyltransferase (160 aa).

Serine 10 contributes to the substrate binding site. ATP contacts are provided by residues serine 10 to phenylalanine 11 and histidine 18. Substrate is bound by residues lysine 42, threonine 74, and arginine 88. ATP-binding positions include glycine 89–arginine 91, glutamate 99, and tyrosine 124–threonine 130.

The protein belongs to the bacterial CoaD family. Homohexamer. Requires Mg(2+) as cofactor.

The protein resides in the cytoplasm. It catalyses the reaction (R)-4'-phosphopantetheine + ATP + H(+) = 3'-dephospho-CoA + diphosphate. It functions in the pathway cofactor biosynthesis; coenzyme A biosynthesis; CoA from (R)-pantothenate: step 4/5. Its function is as follows. Reversibly transfers an adenylyl group from ATP to 4'-phosphopantetheine, yielding dephospho-CoA (dPCoA) and pyrophosphate. The sequence is that of Phosphopantetheine adenylyltransferase from Leptospira biflexa serovar Patoc (strain Patoc 1 / Ames).